A 278-amino-acid polypeptide reads, in one-letter code: Urease accessory protein UreD (278 aa).

The protein belongs to the UreD family. UreD, UreF and UreG form a complex that acts as a GTP-hydrolysis-dependent molecular chaperone, activating the urease apoprotein by helping to assemble the nickel containing metallocenter of UreC. The UreE protein probably delivers the nickel.

It is found in the cytoplasm. In terms of biological role, required for maturation of urease via the functional incorporation of the urease nickel metallocenter. This chain is Urease accessory protein UreD, found in Pseudomonas putida (strain ATCC 700007 / DSM 6899 / JCM 31910 / BCRC 17059 / LMG 24140 / F1).